The following is a 418-amino-acid chain: Gamma-glutamyl phosphate reductase (418 aa).

It belongs to the gamma-glutamyl phosphate reductase family.

The protein localises to the cytoplasm. It carries out the reaction L-glutamate 5-semialdehyde + phosphate + NADP(+) = L-glutamyl 5-phosphate + NADPH + H(+). It participates in amino-acid biosynthesis; L-proline biosynthesis; L-glutamate 5-semialdehyde from L-glutamate: step 2/2. Catalyzes the NADPH-dependent reduction of L-glutamate 5-phosphate into L-glutamate 5-semialdehyde and phosphate. The product spontaneously undergoes cyclization to form 1-pyrroline-5-carboxylate. In Geobacter metallireducens (strain ATCC 53774 / DSM 7210 / GS-15), this protein is Gamma-glutamyl phosphate reductase.